A 155-amino-acid polypeptide reads, in one-letter code: MTIKVIEGDFKASTGKYALLVSRWNSFVVEHLKDGAIDTLRRHGISDENIEVIYAPGAFEFPLAAQKLADAKRYDAIIALGAVIRGGTPHFDYVAGECTKGLAQVSLNAGLPITFGVLTVDSIEQAIERSGTKAGNKGAEAASTALEMVSLISKI.

Residues W24, 58–60 (AFE), and 82–84 (AVI) contribute to the 5-amino-6-(D-ribitylamino)uracil site. 87-88 (GT) contributes to the (2S)-2-hydroxy-3-oxobutyl phosphate binding site. H90 functions as the Proton donor in the catalytic mechanism. A 5-amino-6-(D-ribitylamino)uracil-binding site is contributed by F115. Position 129 (R129) interacts with (2S)-2-hydroxy-3-oxobutyl phosphate.

Belongs to the DMRL synthase family. Forms an icosahedral capsid composed of 60 subunits, arranged as a dodecamer of pentamers.

It catalyses the reaction (2S)-2-hydroxy-3-oxobutyl phosphate + 5-amino-6-(D-ribitylamino)uracil = 6,7-dimethyl-8-(1-D-ribityl)lumazine + phosphate + 2 H2O + H(+). It functions in the pathway cofactor biosynthesis; riboflavin biosynthesis; riboflavin from 2-hydroxy-3-oxobutyl phosphate and 5-amino-6-(D-ribitylamino)uracil: step 1/2. Catalyzes the formation of 6,7-dimethyl-8-ribityllumazine by condensation of 5-amino-6-(D-ribitylamino)uracil with 3,4-dihydroxy-2-butanone 4-phosphate. This is the penultimate step in the biosynthesis of riboflavin. The polypeptide is 6,7-dimethyl-8-ribityllumazine synthase (Saccharophagus degradans (strain 2-40 / ATCC 43961 / DSM 17024)).